The following is a 324-amino-acid chain: MLQHILLYLINPLAYIVPILLATAFLTLVERKILGYMQFRKGPNIVGPYGLLQPIADGVKLFIKEPVRPSTSSPFLFLATPTLALTLALLMWMPLPLPHAIINLNLGLLFILAVSSLTVYTILGSGWASNSKYALMGALRAVAQTISYEVSLGLILLSMIIFTGGFTLHTFNLTQETVWLLVPGWPLAMMWYISTLAETNRAPFDLTEGESELVSGFNVEYAGGSFALFFLAEYTNILMMNTLSVILFMGSSYDPTMPQISTFYLMMKATLLTLIFLWIRASYPRFRYDQLMHLVWKNFLPLTLALILWHAALPIATASLPPLT.

8 helical membrane passes run 5–25 (ILLY…ATAF), 75–95 (FLFL…WMPL), 106–126 (LGLL…LGSG), 146–166 (ISYE…TGGF), 177–197 (TVWL…STLA), 228–248 (LFFL…VILF), 259–279 (QIST…FLWI), and 299–319 (FLPL…ATAS).

Belongs to the complex I subunit 1 family.

Its subcellular location is the mitochondrion inner membrane. It carries out the reaction a ubiquinone + NADH + 5 H(+)(in) = a ubiquinol + NAD(+) + 4 H(+)(out). Core subunit of the mitochondrial membrane respiratory chain NADH dehydrogenase (Complex I) that is believed to belong to the minimal assembly required for catalysis. Complex I functions in the transfer of electrons from NADH to the respiratory chain. The immediate electron acceptor for the enzyme is believed to be ubiquinone. The protein is NADH-ubiquinone oxidoreductase chain 1 (MT-ND1) of Squalus acanthias (Spiny dogfish).